We begin with the raw amino-acid sequence, 366 residues long: GTP cyclohydrolase 1 type 2 homolog (366 aa).

A divalent metal cation-binding residues include H64, H65, D102, H326, and E329.

This sequence belongs to the GTP cyclohydrolase I type 2/NIF3 family. Homohexamer.

This Staphylococcus epidermidis (strain ATCC 12228 / FDA PCI 1200) protein is GTP cyclohydrolase 1 type 2 homolog.